A 369-amino-acid polypeptide reads, in one-letter code: Dual-specificity RNA methyltransferase RlmN (369 aa).

The active-site Proton acceptor is the Glu96. Residues 102–338 (DGERGTLCVS…VTTIRTTRGD (237 aa)) form the Radical SAM core domain. A disulfide bridge connects residues Cys109 and Cys344. Cys116, Cys120, and Cys123 together coordinate [4Fe-4S] cluster. S-adenosyl-L-methionine-binding positions include 169-170 (GE), Ser201, 223-225 (SLH), and Asn301. The active-site S-methylcysteine intermediate is the Cys344.

This sequence belongs to the radical SAM superfamily. RlmN family. [4Fe-4S] cluster is required as a cofactor.

It is found in the cytoplasm. The enzyme catalyses adenosine(2503) in 23S rRNA + 2 reduced [2Fe-2S]-[ferredoxin] + 2 S-adenosyl-L-methionine = 2-methyladenosine(2503) in 23S rRNA + 5'-deoxyadenosine + L-methionine + 2 oxidized [2Fe-2S]-[ferredoxin] + S-adenosyl-L-homocysteine. The catalysed reaction is adenosine(37) in tRNA + 2 reduced [2Fe-2S]-[ferredoxin] + 2 S-adenosyl-L-methionine = 2-methyladenosine(37) in tRNA + 5'-deoxyadenosine + L-methionine + 2 oxidized [2Fe-2S]-[ferredoxin] + S-adenosyl-L-homocysteine. Functionally, specifically methylates position 2 of adenine 2503 in 23S rRNA and position 2 of adenine 37 in tRNAs. m2A2503 modification seems to play a crucial role in the proofreading step occurring at the peptidyl transferase center and thus would serve to optimize ribosomal fidelity. In Marinobacter nauticus (strain ATCC 700491 / DSM 11845 / VT8) (Marinobacter aquaeolei), this protein is Dual-specificity RNA methyltransferase RlmN.